Here is a 55-residue protein sequence, read N- to C-terminus: Riparin-1.5 acid (55 aa).

The N-terminal stretch at 1–15 is a signal peptide; it reads MKIIVFLAVLMLVSA. A propeptide spanning residues 16-41 is cleaved from the precursor; that stretch reads QVCLVSAAEMEHSSDNELSSRDLVKR. Cys47 and Cys53 are joined by a disulfide. The propeptide occupies 54–55; sequence NH.

Expressed by the skin glands.

The protein resides in the secreted. This Crinia riparia (Streambank froglet) protein is Riparin-1.5 acid.